The chain runs to 549 residues: uncharacterized protein (549 aa).

Residues 1 to 19 (MNWRRIVWLLALVTLPTLA) form the signal peptide.

This is an uncharacterized protein from Escherichia coli (strain K12).